The primary structure comprises 311 residues: Methionyl-tRNA formyltransferase (311 aa).

Residue 110–113 (SLLP) participates in (6S)-5,6,7,8-tetrahydrofolate binding.

This sequence belongs to the Fmt family.

The catalysed reaction is L-methionyl-tRNA(fMet) + (6R)-10-formyltetrahydrofolate = N-formyl-L-methionyl-tRNA(fMet) + (6S)-5,6,7,8-tetrahydrofolate + H(+). Attaches a formyl group to the free amino group of methionyl-tRNA(fMet). The formyl group appears to play a dual role in the initiator identity of N-formylmethionyl-tRNA by promoting its recognition by IF2 and preventing the misappropriation of this tRNA by the elongation apparatus. The protein is Methionyl-tRNA formyltransferase of Streptococcus gordonii (strain Challis / ATCC 35105 / BCRC 15272 / CH1 / DL1 / V288).